Reading from the N-terminus, the 205-residue chain is Beta-crystallin B2 (205 aa).

Residue Ala-2 is modified to N-acetylalanine. An N-terminal arm region spans residues 2–16 (ASDHQTQAGKPQPLN). Beta/gamma crystallin 'Greek key' domains follow at residues 17–56 (PKII…LVQA) and 57–101 (GPWV…RPIK). The tract at residues 102-106 (VDSQE) is connecting peptide. Beta/gamma crystallin 'Greek key' domains lie at 107–148 (HKII…RVQS) and 149–191 (GTWV…RRIR). The C-terminal arm stretch occupies residues 193-205 (MQWHQRGAFHPSS).

The protein belongs to the beta/gamma-crystallin family. As to quaternary structure, homo/heterodimer, or complexes of higher-order. The structure of beta-crystallin oligomers seems to be stabilized through interactions between the N-terminal arms.

In terms of biological role, crystallins are the dominant structural components of the vertebrate eye lens. In Mesocricetus auratus (Golden hamster), this protein is Beta-crystallin B2 (CRYBB2).